We begin with the raw amino-acid sequence, 406 residues long: MSFPIERVRADFPLLSRQVNGQPLVYLDSAASAQKPQAVIDKELHFYRDGYAAVHRGIHSLSAEATQQMEAVRTQVADFIHAASAEEIIFVRGTTEAINLVANSYGRHFLVTGDSIIITEMEHHANIVPWQMLAQDLGVEIRVWPLTATGELEITDLAALIDDTTRLLAVTQISNVLGTVNPIKDIVAQAKAAGLVVLVDGAQAVMHQPVDVQALGCDFYVFSGHKLYGPSGIGILYGKSALLQQMPPWEGGGAMIKTVSLTQGTTFADAPWRFEAGSPNTAGIMGLGAAIDYVTELGLLQIQQYEQSLMHYALAQLSQIKSLTLYGPTERAGVIAFNLGLHHAYDVGSFLDQYGIAIRTGHHCAMPLMAFYQVPSMCRASLALYNTREDVDRLVAGLQRIEKLLG.

Residue Lys226 is modified to N6-(pyridoxal phosphate)lysine. Cys364 serves as the catalytic Cysteine persulfide intermediate.

This sequence belongs to the class-V pyridoxal-phosphate-dependent aminotransferase family. Csd subfamily. As to quaternary structure, homodimer. Interacts with SufE and the SufBCD complex composed of SufB, SufC and SufD. The interaction with SufE is required to mediate the direct transfer of the sulfur atom from the S-sulfanylcysteine. Requires pyridoxal 5'-phosphate as cofactor.

It is found in the cytoplasm. It carries out the reaction (sulfur carrier)-H + L-cysteine = (sulfur carrier)-SH + L-alanine. The enzyme catalyses L-selenocysteine + AH2 = hydrogenselenide + L-alanine + A + H(+). It participates in cofactor biosynthesis; iron-sulfur cluster biosynthesis. Its function is as follows. Cysteine desulfurases mobilize the sulfur from L-cysteine to yield L-alanine, an essential step in sulfur metabolism for biosynthesis of a variety of sulfur-containing biomolecules. Component of the suf operon, which is activated and required under specific conditions such as oxidative stress and iron limitation. Acts as a potent selenocysteine lyase in vitro, that mobilizes selenium from L-selenocysteine. Selenocysteine lyase activity is however unsure in vivo. The sequence is that of Cysteine desulfurase from Yersinia pseudotuberculosis serotype O:1b (strain IP 31758).